Reading from the N-terminus, the 1829-residue chain is Sodium channel protein type 4 subunit alpha A (1829 aa).

Over 1–124 (MARLLPPTGT…RGAIKILIHS (124 aa)) the chain is Cytoplasmic. The disordered stretch occupies residues 32-52 (STREELEGAEEEPQAPSSDLE). Residues 106-421 (CISPFSIVRR…VVAMAYDEQN (316 aa)) form an I repeat. The chain crosses the membrane as a helical span at residues 125 to 143 (LFSMFIMITILSNCVFMTM). Topologically, residues 144-150 (SNPPAWS) are extracellular. Residues 151–171 (KTVEYVFTGIYTFEATVKVLS) traverse the membrane as a helical segment. Topologically, residues 172–185 (RGFCIGPFTFLRDP) are cytoplasmic. Residues 186-203 (WNWLDFMVISMAYVTEFV) traverse the membrane as a helical segment. The Extracellular portion of the chain corresponds to 204–209 (DLGNVS). The N-linked (GlcNAc...) asparagine glycan is linked to asparagine 207. Residues 210–226 (ALRTFRVLRALKTITVI) form a helical membrane-spanning segment. Topologically, residues 227–245 (PGLKTIVGALIQSVKKMID) are cytoplasmic. Residues 246–265 (VMILTIFALAVFALIGLQLF) form a helical membrane-spanning segment. At 266–358 (MGNLRQKCIR…PNYGYTSYDN (93 aa)) the chain is on the extracellular side. A disulfide bridge connects residues cysteine 273 and cysteine 327. Asparagine 280, asparagine 293, and asparagine 329 each carry an N-linked (GlcNAc...) asparagine glycan. Cysteines 336 and 342 form a disulfide. The pore-forming intramembrane region spans 359–383 (FGWAFLALFRLMTQDFWENLFQLTL). At 384-390 (RAAGKTY) the chain is on the extracellular side. Residues 391-411 (MIFFVVVIFLGSFYLINLILA) traverse the membrane as a helical segment. The Cytoplasmic portion of the chain corresponds to 412-582 (VVAMAYDEQN…KWVHFVVMDP (171 aa)). Residues 446-467 (ETGSKASLASQKTQSRGSNRTG) are compositionally biased toward polar residues. Positions 446–468 (ETGSKASLASQKTQSRGSNRTGS) are disordered. The stretch at 564–836 (CCAPWILFKK…QIAIGRITRG (273 aa)) is one II repeat. The chain crosses the membrane as a helical span at residues 583–601 (FVDLGITICIVLNTLFMAM). At 602 to 612 (EHYPMSPHFEH) the chain is on the extracellular side. A helical membrane pass occupies residues 613–632 (VLSVGNLVFTGIFTAEMVFK). At 633–646 (LIAMDPYYYFQVGW) the chain is on the cytoplasmic side. The chain crosses the membrane as a helical span at residues 647–666 (NIFDSIIVTLSLVELGLANV). The Extracellular segment spans residues 667–668 (QG). Residues 669–686 (LSVLRSFRLLRVFKLAKS) form a helical membrane-spanning segment. The Cytoplasmic portion of the chain corresponds to 687 to 702 (WPTLNMLIKIIGNSVG). A helical membrane pass occupies residues 703 to 721 (ALGNLTLVLAIIVFIFAVV). The Extracellular segment spans residues 722–750 (GMQLFGKSYKDCVCKISEDCELPRWHMND). A disulfide bridge links cysteine 735 with cysteine 741. The pore-forming intramembrane region spans 751–771 (FFHSFLIVFRILCGEWIETMW). Topologically, residues 772-782 (DCMEVAGASMC) are extracellular. The cysteines at positions 773 and 782 are disulfide-linked. The helical transmembrane segment at 783–801 (LIVFMMVMVIGNLVVLNLF) threads the bilayer. The Cytoplasmic portion of the chain corresponds to 802 to 998 (LALLLSSFSG…TCFTIVEHDY (197 aa)). A disordered region spans residues 901 to 957 (SDVEEDEDSESSDEEDAKATLNDGDSSVCSTVDYQPPEPEPEPEEVEEEEPEPEEPE). Over residues 902-916 (DVEEDEDSESSDEED) the composition is skewed to acidic residues. The span at 923–933 (DGDSSVCSTVD) shows a compositional bias: polar residues. Positions 939-957 (PEPEPEEVEEEEPEPEEPE) are enriched in acidic residues. Residues 979 to 1292 (WGKKWWNLRR…KKYYNAMKKL (314 aa)) form an III repeat. A helical transmembrane segment spans residues 999-1016 (FETFIIFMILLSSGALAF). The Extracellular portion of the chain corresponds to 1017-1029 (EDINIERRRVIKT). The chain crosses the membrane as a helical span at residues 1030 to 1048 (ILEYADKVFTYIFIVEMLL). The Cytoplasmic portion of the chain corresponds to 1049 to 1062 (KWVAYGFKTYFTNA). The chain crosses the membrane as a helical span at residues 1063–1081 (WCWLDFLIVDVSLVSLTAN). Residues 1082–1089 (LMGYSELG) lie on the Extracellular side of the membrane. Residues 1090–1108 (AIKSLRTLRALRPLRALSR) traverse the membrane as a helical segment. Topologically, residues 1109 to 1125 (FEGMRVVVNALVGAIPS) are cytoplasmic. The chain crosses the membrane as a helical span at residues 1126–1145 (IFNVLLVCLIFWLIFSIMGV). At 1146–1196 (NLFAGKFYHCINTTTEERIPMDVVNNKSDCMALMYTNEVRWVNVKVNYDNV) the chain is on the extracellular side. A disulfide bond links cysteine 1155 and cysteine 1175. N-linked (GlcNAc...) asparagine glycosylation is found at asparagine 1157 and asparagine 1171. Residues 1197–1218 (GLGYLSLLQIATFKGWMDIMYA) constitute an intramembrane region (pore-forming). At 1219–1235 (AVDSREVDEQPSYEINL) the chain is on the extracellular side. The helical transmembrane segment at 1236-1257 (YMYLYFVIFIIFGSFFTLNLFI) threads the bilayer. Over 1258 to 1320 (GVIIDNFNQQ…LVFDFISKQF (63 aa)) the chain is Cytoplasmic. Positions 1276 to 1278 (IFM) are important for rapid channel inactivation. An IV repeat occupies 1301–1599 (IPRPSNIIQG…WEKFDVDATQ (299 aa)). The helical transmembrane segment at 1321–1338 (FDIFIMVLICLNMVTMMI) threads the bilayer. Residues 1339–1349 (ETDDQSAEKEY) lie on the Extracellular side of the membrane. A helical membrane pass occupies residues 1350-1368 (VLYQINLVFIVVFTSECVL). Residues 1369–1380 (KLFALRQYFFTI) are Cytoplasmic-facing. The chain crosses the membrane as a helical span at residues 1381–1398 (GWNVFDFVVVILSIAGLM). The Extracellular segment spans residues 1399-1411 (LSDIIEKYFVSPT). The helical transmembrane segment at 1412–1428 (LFRVIRLARIGRVLRLI) threads the bilayer. The Cytoplasmic portion of the chain corresponds to 1429–1447 (RGAKGIRTLLFALMMSLPA). A helical membrane pass occupies residues 1448–1465 (LFNIGLLLFLIMFIFSIF). At 1466–1487 (GMSNFAYVKKQAGIDDIFNFET) the chain is on the extracellular side. The pore-forming intramembrane region spans 1488–1510 (FGGSIICLFEITTSAGWDGLLLP). Residues 1511–1540 (ILNSGPPDCDPDFENPGTDVRGNCGNPGMG) are Extracellular-facing. Cysteine 1519 and cysteine 1534 are joined by a disulfide. A helical membrane pass occupies residues 1541 to 1563 (IMFFCSYIIMSFLVVVNMYIAII). Residues 1564 to 1829 (LENFNNAQEE…NATTIKESIV (266 aa)) lie on the Cytoplasmic side of the membrane. An IQ domain is found at 1693–1722 (EERAAIAVQRIYRRHLLKRAIRYACFMRRS). The disordered stretch occupies residues 1765–1786 (PMRPNSQPPKPSQVTQTRASVT).

This sequence belongs to the sodium channel (TC 1.A.1.10) family. Nav1.4/SCN4A subfamily. As to quaternary structure, voltage-gated sodium (Nav) channels consist of an ion-conducting alpha subunit which is functional on its own associated with regulatory beta subunits. As to expression, expressed in skeletal muscle, brain, spinal cord, and eye.

The protein localises to the cell membrane. It carries out the reaction Na(+)(in) = Na(+)(out). Pore-forming subunit of a voltage-gated sodium (Nav) channel that directly mediates the depolarizing phase of action potentials in excitable membranes. Navs, also called VGSCs (voltage-gated sodium channels) or VDSCs (voltage-dependent sodium channels), operate by switching between closed and open conformations depending on the voltage difference across the membrane. In the open conformation they allow Na(+) ions to selectively pass through the pore, along their electrochemical gradient. The influx of Na+ ions provokes membrane depolarization, initiating the propagation of electrical signals throughout cells and tissues. The protein is Sodium channel protein type 4 subunit alpha A (scn4aa) of Danio rerio (Zebrafish).